The chain runs to 234 residues: Large ribosomal subunit protein uL1 (234 aa).

Belongs to the universal ribosomal protein uL1 family. As to quaternary structure, part of the 50S ribosomal subunit.

Binds directly to 23S rRNA. The L1 stalk is quite mobile in the ribosome, and is involved in E site tRNA release. Its function is as follows. Protein L1 is also a translational repressor protein, it controls the translation of the L11 operon by binding to its mRNA. In Desulfatibacillum aliphaticivorans, this protein is Large ribosomal subunit protein uL1.